The following is a 255-amino-acid chain: Putative cysteine-rich repeat secretory protein 10 (255 aa).

A signal peptide spans 1–26; that stretch reads MFSSSVSISILVVVAMQFSFIHNVLS. 2 consecutive Gnk2-homologous domains span residues 33-134 and 140-252; these read YLQH…EIYT and FKHY…LYPF.

Belongs to the cysteine-rich repeat secretory protein family.

The protein localises to the secreted. In Arabidopsis thaliana (Mouse-ear cress), this protein is Putative cysteine-rich repeat secretory protein 10 (CRRSP10).